Reading from the N-terminus, the 373-residue chain is Extensin-1 (373 aa).

An N-terminal signal peptide occupies residues 1 to 19 (MASFLVLAFSLAFVSQTTA). 36 consecutive repeat copies span residues 25–33 (SPPPPVKHY), 34–40 (SPPPVYK), 41–49 (SPPPPVKHY), 50–56 (SPPPVYK), 57–65 (SPPPPVKHY), 66–72 (SPPPVYK), 73–81 (SPPPPVKYY), 82–88 (SPPPVYK), 97–105 (SPPPPVKHY), 106–112 (SPPPVYK), 113–121 (SPPPPVKHY), 122–128 (SPPPVYK), 129–137 (SPPPPVKHY), 138–144 (SPPPVYK), 145–153 (SPPPPVKHY), 154–160 (SPPPVYK), 161–169 (SPPPPVKYY), 170–176 (SPPPVYK), 177–185 (SPPPPVKHY), 186–192 (SPPPVYK), 193–201 (SPPPPVKYY), 202–208 (SPPPVYK), 209–217 (SPPPPVKHY), 218–224 (SPPPVYK), 225–233 (SPPPPVKYY), 234–240 (SPPPVYK), 241–248 (SPPPPVHY), 249–256 (SPPPVVYH), 257–264 (SPPPPVHY), 265–272 (SPPPVVYH), 273–280 (SPPPPVHY), 281–288 (SPPPVVYH), 289–296 (SPPPPVHY), 297–304 (SPPPVVYH), 305–312 (SPPPPVHY), and 313–320 (SPPPVVYH). Residues 25 to 233 (SPPPPVKHYS…KSPPPPVKYY (209 aa)) form a 13 X 9 AA repeats of S-P-P-P-P-V-K-[HY]-Y region. The tract at residues 34–240 (SPPPVYKSPP…KYYSPPPVYK (207 aa)) is 13 X 7 AA repeats of S-P-P-P-V-Y-K. Residues 241 to 312 (SPPPPVHYSP…YHSPPPPVHY (72 aa)) form a 5 X 8 AA repeats of S-P-P-P-P-V-H-Y region. Residues 249–320 (SPPPVVYHSP…HYSPPPVVYH (72 aa)) form a 5 X 8 AA repeats of S-P-P-P-V-V-Y-H region. 2 isodityrosine cross-linking regions span residues 329 to 332 (YEYK) and 363 to 366 (YLYK). A disordered region spans residues 349 to 373 (PPPPVHHYSPPHQPYLYKSPPPPHY).

The protein belongs to the extensin family. In terms of processing, extensins contain a characteristic repeat of the pentapeptide Ser-Pro(4). For this particular extensin, a typical repeat of Ser-Pro(3) is found. In both cases, the proline residues are hydroxylated and then O-glycosylated (arabinosylation). Post-translationally, synthetised as soluble proteins which become insolubilised in the cell wall through the intermolecular cross-linking of Tyr on adjacent monomers. Isodityrosine (IDT) stabilizes and makes rigid the part of the polypeptide where IDT functional sites are present. Predominantly expressed in the roots. Not detected in the leaves, nor in flowers or flower buds. Wounding reverses this pattern, turning on the gene in the leaves and repressing it in the roots.

It localises to the secreted. The protein localises to the primary cell wall. Its function is as follows. Structural component which strengthens the primary cell wall. This chain is Extensin-1, found in Arabidopsis thaliana (Mouse-ear cress).